The chain runs to 474 residues: ATP synthase subunit beta 1 (474 aa).

ATP is bound at residue 157-164; it reads GGAGVGKT.

It belongs to the ATPase alpha/beta chains family. F-type ATPases have 2 components, CF(1) - the catalytic core - and CF(0) - the membrane proton channel. CF(1) has five subunits: alpha(3), beta(3), gamma(1), delta(1), epsilon(1). CF(0) has three main subunits: a(1), b(2) and c(9-12). The alpha and beta chains form an alternating ring which encloses part of the gamma chain. CF(1) is attached to CF(0) by a central stalk formed by the gamma and epsilon chains, while a peripheral stalk is formed by the delta and b chains.

The protein localises to the cell inner membrane. The catalysed reaction is ATP + H2O + 4 H(+)(in) = ADP + phosphate + 5 H(+)(out). Produces ATP from ADP in the presence of a proton gradient across the membrane. The catalytic sites are hosted primarily by the beta subunits. The polypeptide is ATP synthase subunit beta 1 (Albidiferax ferrireducens (strain ATCC BAA-621 / DSM 15236 / T118) (Rhodoferax ferrireducens)).